The following is a 427-amino-acid chain: Riboflavin transporter rft-1 (427 aa).

At 1-2 (MK) the chain is on the cytoplasmic side. A helical transmembrane segment spans residues 3-23 (TFLFTFCLVAIFGSSSWIGTN). Residues 24-42 (SVWMELSLLTAKLPEGWNL) are Extracellular-facing. The helical transmembrane segment at 43–63 (PSYLSAIVQIACLGPLIYSII) threads the bilayer. Topologically, residues 64-73 (HKGIKMTIPT) are cytoplasmic. The chain crosses the membrane as a helical span at residues 74–94 (VPLIFIFMVLACICQLGLCFF). At 95–111 (WDDTGYIFGAIRSWPLY) the chain is on the extracellular side. A helical membrane pass occupies residues 112–132 (LLLFGLAIVDAISSVLFLPFM). At 133–139 (AQFHPSF) the chain is on the cytoplasmic side. The helical transmembrane segment at 140–160 (LNAYFVGMGLSALIPSLLSLI) threads the bilayer. Over 161 to 184 (QGTSNYWCDDNKTPHYYPPRFSVS) the chain is Extracellular. A helical transmembrane segment spans residues 185–205 (MFFLINFFFTCAAVAAFLVLY). Residues 206–261 (KIGAHKNSSQVEPEPKHSIQIIQGDSTTDVNEVNTESSFQETSSIPDSSSATGARL) are Cytoplasmic-facing. A helical membrane pass occupies residues 262 to 282 (AFLLLTTALVNAQMNGIVTSV). Residues 283 to 297 (QSYATLVYSQNTYHY) are Extracellular-facing. A helical transmembrane segment spans residues 298 to 318 (AVTLSNVISPLASYLQFFVKI). Topologically, residues 319–322 (RSLP) are cytoplasmic. Residues 323–343 (ILAFLTLCSSLTTAVIIYLAA) form a helical membrane-spanning segment. At 344 to 353 (LSPNWIFNSE) the chain is on the extracellular side. A helical transmembrane segment spans residues 354–374 (TAGTIISIASSLIAAGLHSYL). The Cytoplasmic portion of the chain corresponds to 375–391 (RVMFAALLREGNQKESR). Residues 392-412 (LFWCGAFIQIGSFTGSAIMFP) traverse the membrane as a helical segment. Residues 413–427 (LVNVWKLFHSAPSCR) are Extracellular-facing.

It belongs to the riboflavin transporter family. Expressed in intestine.

It localises to the cell membrane. The enzyme catalyses riboflavin(in) = riboflavin(out). Activity is strongly inhibited by riboflavin analogs, such as lumiflavin and lumichrome. Functionally, riboflavin transporter. Riboflavin transport is Na(+)-independent but pH-sensitive. The sequence is that of Riboflavin transporter rft-1 from Caenorhabditis elegans.